We begin with the raw amino-acid sequence, 143 residues long: Flagellar assembly factor FliW (143 aa).

The protein belongs to the FliW family. In terms of assembly, interacts with translational regulator CsrA and flagellin(s).

The protein resides in the cytoplasm. In terms of biological role, acts as an anti-CsrA protein, binds CsrA and prevents it from repressing translation of its target genes, one of which is flagellin. Binds to flagellin and participates in the assembly of the flagellum. The sequence is that of Flagellar assembly factor FliW from Clostridium botulinum (strain 657 / Type Ba4).